The sequence spans 216 residues: Enolase-phosphatase E1 (216 aa).

Mg(2+) contacts are provided by D8 and E10. Residues 115–116 and K149 contribute to the substrate site; that span reads SS. A Mg(2+)-binding site is contributed by D172.

Belongs to the HAD-like hydrolase superfamily. MasA/MtnC family. Monomer. Requires Mg(2+) as cofactor.

It localises to the cytoplasm. The protein localises to the nucleus. It catalyses the reaction 5-methylsulfanyl-2,3-dioxopentyl phosphate + H2O = 1,2-dihydroxy-5-(methylsulfanyl)pent-1-en-3-one + phosphate. It participates in amino-acid biosynthesis; L-methionine biosynthesis via salvage pathway; L-methionine from S-methyl-5-thio-alpha-D-ribose 1-phosphate: step 3/6. It functions in the pathway amino-acid biosynthesis; L-methionine biosynthesis via salvage pathway; L-methionine from S-methyl-5-thio-alpha-D-ribose 1-phosphate: step 4/6. Functionally, bifunctional enzyme that catalyzes the enolization of 2,3-diketo-5-methylthiopentyl-1-phosphate (DK-MTP-1-P) into the intermediate 2-hydroxy-3-keto-5-methylthiopentenyl-1-phosphate (HK-MTPenyl-1-P), which is then dephosphorylated to form the acireductone 1,2-dihydroxy-3-keto-5-methylthiopentene (DHK-MTPene). In Schizosaccharomyces pombe (strain 972 / ATCC 24843) (Fission yeast), this protein is Enolase-phosphatase E1 (utr4).